Reading from the N-terminus, the 485-residue chain is DNA polymerase subunit gamma-2 (485 aa).

Residues 28–67 form a disordered region; it reads RQPEQLSKGTGSFVGPVRSQAELPRNEPREAPESGGEGSE.

As to quaternary structure, heterotrimer composed of a catalytic subunit and a homodimer of accessory subunits (POLG:POLG2).

It is found in the mitochondrion. Its subcellular location is the mitochondrion matrix. The protein localises to the mitochondrion nucleoid. Accessory subunit of DNA polymerase gamma solely responsible for replication of mitochondrial DNA (mtDNA). Acts as an allosteric regulator of the holoenzyme activities. Enhances the polymerase activity and the processivity of POLG by increasing its interactions with the DNA template. Suppresses POLG exonucleolytic proofreading especially toward homopolymeric templates bearing mismatched termini. Binds to single-stranded DNA. The chain is DNA polymerase subunit gamma-2 (POLG2) from Bos taurus (Bovine).